Here is a 629-residue protein sequence, read N- to C-terminus: Phosphatidylinositol-3,5-bisphosphate 3-phosphatase MTMR8 (629 aa).

Residues 126-500 enclose the Myotubularin phosphatase domain; it reads GWKLIDLKVD…FSFQFWCGMY (375 aa). The a 1,2-diacyl-sn-glycero-3-phospho-(1D-myo-inositol-3,5-bisphosphate) site is built by Asn250, Asn275, and Ile276. Residues Asn250, Asn275, and Ile276 each coordinate a 1,2-diacyl-sn-glycero-3-phospho-(1D-myo-inositol-3-phosphate). The Phosphocysteine intermediate role is filled by Cys338. Residues Ser339, Asp340, Gly341, Trp342, Asp343, Arg344, Lys380, and Arg384 each coordinate a 1,2-diacyl-sn-glycero-3-phospho-(1D-myo-inositol-3,5-bisphosphate). The a 1,2-diacyl-sn-glycero-3-phospho-(1D-myo-inositol-3-phosphate) site is built by Ser339, Asp340, Gly341, Trp342, Asp343, and Arg344. Ser339 and Asp340 together coordinate phosphate. 3 residues coordinate phosphate: Trp342, Asp343, and Arg344. Position 384 (Arg384) interacts with a 1,2-diacyl-sn-glycero-3-phospho-(1D-myo-inositol-3-phosphate). Residues 517-543 adopt a coiled-coil conformation; that stretch reads LLSCMNQKIKLEDNASELENKLPFLDG.

Belongs to the protein-tyrosine phosphatase family. Non-receptor class myotubularin subfamily. As to quaternary structure, homodimer.

Its subcellular location is the nucleus envelope. The enzyme catalyses a 1,2-diacyl-sn-glycero-3-phospho-(1D-myo-inositol-3,5-bisphosphate) + H2O = a 1,2-diacyl-sn-glycero-3-phospho-(1D-myo-inositol-5-phosphate) + phosphate. It carries out the reaction a 1,2-diacyl-sn-glycero-3-phospho-(1D-myo-inositol-3-phosphate) + H2O = a 1,2-diacyl-sn-glycero-3-phospho-(1D-myo-inositol) + phosphate. The catalysed reaction is 1,2-dioctanoyl-sn-glycero-3-phospho-(1D-myo-inositol-3,5-bisphosphate) + H2O = 1,2-dioctanoyl-sn-glycero-3-phospho-(1D-myo-inositol-5-phosphate) + phosphate. Functionally, lipid phosphatase that specifically dephosphorylates the D-3 position of phosphatidylinositol 3-phosphate and phosphatidylinositol 3,5-bisphosphate, generating phosphatidylinositol and phosphatidylinositol 5-phosphate. The sequence is that of Phosphatidylinositol-3,5-bisphosphate 3-phosphatase MTMR8 from Gallus gallus (Chicken).